Reading from the N-terminus, the 101-residue chain is MEIKILSERYNPLLKRKEYRFIVDHDGPTPTFKDVKLKLAAILNANKDLLIVEKIVEEAGMQRARGYAKLYDNEEMLKLVEREHILRKNKIEEETAAEEGE.

The protein belongs to the eukaryotic ribosomal protein eS24 family.

The protein is Small ribosomal subunit protein eS24 of Methanocaldococcus jannaschii (strain ATCC 43067 / DSM 2661 / JAL-1 / JCM 10045 / NBRC 100440) (Methanococcus jannaschii).